The following is a 1604-amino-acid chain: Transposon Ty1-DR4 Gag-Pol polyprotein (1604 aa).

Polar residues-rich tracts occupy residues 1–23, 48–60, and 127–152; these read MESQ…SVTS, TKAN…TPAS, and QSQF…GNTF. 3 disordered regions span residues 1–93, 126–174, and 352–421; these read MESQ…MMTQ, PQSQ…PPPM, and GSRN…SKST. The segment covering 153–165 has biased composition (low complexity); the sequence is TDSSSADSDMTST. Residues 299–401 are RNA-binding; it reads NNGIHINNKV…NSKSKTARAH (103 aa). Low complexity predominate over residues 402-418; that stretch reads NVSTSNNSPSTDNDSIS. Phosphoserine is present on serine 416. Aspartate 461 functions as the For protease activity; shared with dimeric partner in the catalytic mechanism. An integrase-type zinc finger-like region spans residues 583–640; sequence NVHTSESTRKYPYPFIHRMLAHANAQTIRYSLKNNTITYFNESDVDWSSAIDYQCPDC. The Integrase catalytic domain occupies 660-835; the sequence is NSYEPFQYLH…AGLDISTLLP (176 aa). Mg(2+) is bound by residues aspartate 671 and aspartate 736. Disordered stretches follow at residues 956 to 1087, 1092 to 1111, and 1130 to 1187; these read SKAV…ETEK, RSPS…NIVP, and DLPL…DNET. The span at 960 to 969 shows a compositional bias: low complexity; that stretch reads SPTDSTPPST. Residues 1005–1015 are compositionally biased toward polar residues; it reads STPQISNIEST. Positions 1038–1053 are enriched in basic and acidic residues; that stretch reads ESSHASKSKDFRHSDS. 2 stretches are compositionally biased toward polar residues: residues 1054-1082 and 1101-1111; these read YSEN…QISD and PENNSSHNIVP. The short motif at 1178–1212 is the Bipartite nuclear localization signal element; it reads KKRSLEDNETEIKVSRDTWNTKNMRSLEPPRSKKR. Residues 1338 to 1476 form the Reverse transcriptase Ty1/copia-type domain; the sequence is NNYYITQLDI…DILGLEIKYQ (139 aa). Mg(2+) is bound by residues aspartate 1346, aspartate 1427, and aspartate 1428.

The capsid protein forms a homotrimer, from which the VLPs are assembled. The protease is a homodimer, whose active site consists of two apposed aspartic acid residues. Initially, virus-like particles (VLPs) are composed of the structural unprocessed proteins Gag and Gag-Pol, and also contain the host initiator methionine tRNA (tRNA(i)-Met) which serves as a primer for minus-strand DNA synthesis, and a dimer of genomic Ty RNA. Processing of the polyproteins occurs within the particle and proceeds by an ordered pathway, called maturation. First, the protease (PR) is released by autocatalytic cleavage of the Gag-Pol polyprotein yielding capsid protein p45 and a Pol-p154 precursor protein. This cleavage is a prerequisite for subsequent processing of Pol-p154 at the remaining sites to release the mature structural and catalytic proteins. Maturation takes place prior to the RT reaction and is required to produce transposition-competent VLPs.

It is found in the cytoplasm. The protein resides in the nucleus. It carries out the reaction DNA(n) + a 2'-deoxyribonucleoside 5'-triphosphate = DNA(n+1) + diphosphate. It catalyses the reaction Endonucleolytic cleavage to 5'-phosphomonoester.. In terms of biological role, capsid protein (CA) is the structural component of the virus-like particle (VLP), forming the shell that encapsulates the retrotransposons dimeric RNA genome. The particles are assembled from trimer-clustered units and there are holes in the capsid shells that allow for the diffusion of macromolecules. CA also has nucleocapsid-like chaperone activity, promoting primer tRNA(i)-Met annealing to the multipartite primer-binding site (PBS), dimerization of Ty1 RNA and initiation of reverse transcription. Functionally, the aspartyl protease (PR) mediates the proteolytic cleavages of the Gag and Gag-Pol polyproteins after assembly of the VLP. Reverse transcriptase/ribonuclease H (RT) is a multifunctional enzyme that catalyzes the conversion of the retro-elements RNA genome into dsDNA within the VLP. The enzyme displays a DNA polymerase activity that can copy either DNA or RNA templates, and a ribonuclease H (RNase H) activity that cleaves the RNA strand of RNA-DNA heteroduplexes during plus-strand synthesis and hydrolyzes RNA primers. The conversion leads to a linear dsDNA copy of the retrotransposon that includes long terminal repeats (LTRs) at both ends. Its function is as follows. Integrase (IN) targets the VLP to the nucleus, where a subparticle preintegration complex (PIC) containing at least integrase and the newly synthesized dsDNA copy of the retrotransposon must transit the nuclear membrane. Once in the nucleus, integrase performs the integration of the dsDNA into the host genome. This chain is Transposon Ty1-DR4 Gag-Pol polyprotein (TY1B-DR4), found in Saccharomyces cerevisiae (strain ATCC 204508 / S288c) (Baker's yeast).